The chain runs to 305 residues: Mas-related G-protein coupled receptor member A8 (305 aa).

Topologically, residues 1 to 17 are extracellular; sequence MDKTILGSIDIETLIRH. A helical transmembrane segment spans residues 18 to 38; it reads LMIIIFGLVGLTGNAIVFWLL. Residues 39-46 are Cytoplasmic-facing; sequence GFHLHRNA. A helical transmembrane segment spans residues 47-67; sequence FLVYILNLALADFFYLLCHII. At 68-85 the chain is on the extracellular side; that stretch reads NSIMFLLKVPSPNIILDH. Residues 86–106 traverse the membrane as a helical segment; the sequence is CFYTIMIVLYITGLSMLSAIS. The Cytoplasmic segment spans residues 107–129; the sequence is TERCLSVLCPIWYRCHRPEHTST. Residues 130-150 form a helical membrane-spanning segment; the sequence is AMCAVIWVMSLLISILNGYFC. N-linked (GlcNAc...) asparagine glycans are attached at residues Asn151 and Asn159. At 151–172 the chain is on the extracellular side; the sequence is NFSSPKYVNNSVCQASDIFIRT. A helical membrane pass occupies residues 173-193; the sequence is YPIFLFVLLCLSTLALLARLF. Topologically, residues 194-207 are cytoplasmic; it reads SGAGKRKFTRLFVT. A helical membrane pass occupies residues 208–228; the sequence is IMLAILVFLLCGLPLGFFWFL. Over 229–243 the chain is Extracellular; it reads SPWIEDRFIVLDYRL. Residues 244-264 form a helical membrane-spanning segment; sequence FFASVVLTVVNSCANPIIYFF. The Cytoplasmic portion of the chain corresponds to 265-305; it reads VGSFRHRLKQQTLKMFLQRALQDTPETPENMVEMSRSKAEP.

This sequence belongs to the G-protein coupled receptor 1 family. Mas subfamily. In terms of tissue distribution, expressed in a subset of sensory neurons that includes nociceptors. Expressed in the subclass of non-peptidergic sensory neurons that are IB4(+) and VR1(-).

The protein localises to the cell membrane. Functionally, orphan receptor. May be a receptor for RFamide-family neuropeptides such as NPFF and NPAF, which are analgesic in vivo. May regulate nociceptor function and/or development, including the sensation or modulation of pain. In Mus musculus (Mouse), this protein is Mas-related G-protein coupled receptor member A8 (Mrgpra8).